The following is a 375-amino-acid chain: MFSIDLIQQIKEWKRGSTLPICLGCDVGGSGLRVRLSDFHDSAKYVDLGHAKAQKTAELLKVLEDLQQKILQVEPTTVCLGAAIAVAGPIKNNTVILTNWKGPAEERTLSITQLPKGLFPKDRSYFLNDLEAGAYGVIAAYEQSILEENFVQLFTDRAPTGPILAKGRTAVLAMGSGLGAALVTRTPLLKNPLVLPTELGHLQIAPNMATHKYFQDEQELIQHISDHYYGGKLDPEYEDICSGRGLQLAFQFYHKKLTGEVLPLEQIDAGDVAKKAIAGEKDAYNALRAHYIFYLRAAKAIATSLSCESCVLSLDNQVKNHPFVMKIAKELEEEFYEFIRPDWMTSVRVYSQKSILNFNILGTDYMAHAIANKPQ.

ATP is bound at residue 25 to 30 (CDVGGS).

The protein belongs to the bacterial glucokinase family. Monomer. The N-terminus is blocked.

The catalysed reaction is D-glucose + ATP = D-glucose 6-phosphate + ADP + H(+). The protein is Glucokinase 1 (GK1) of Trichomonas vaginalis.